The primary structure comprises 309 residues: Olfactory receptor 7A17 (309 aa).

The Extracellular portion of the chain corresponds to M1–P25. A glycan (N-linked (GlcNAc...) asparagine) is linked at N5. The chain crosses the membrane as a helical span at residues F26–I46. Topologically, residues L47–H54 are cytoplasmic. The chain crosses the membrane as a helical span at residues L55–S75. At T76–T99 the chain is on the extracellular side. C97 and C189 are disulfide-bonded. The chain crosses the membrane as a helical span at residues Q100–Y120. Topologically, residues D121 to R139 are cytoplasmic. A helical membrane pass occupies residues L140–S160. Over L161–M197 the chain is Extracellular. Residues G198–S217 traverse the membrane as a helical segment. Topologically, residues Y218–A237 are cytoplasmic. The chain crosses the membrane as a helical span at residues F238–V258. Over Y259–S271 the chain is Extracellular. The chain crosses the membrane as a helical span at residues A272–L292. Topologically, residues R293–Q309 are cytoplasmic.

Belongs to the G-protein coupled receptor 1 family.

It is found in the cell membrane. Its function is as follows. Odorant receptor. This chain is Olfactory receptor 7A17 (OR7A17), found in Homo sapiens (Human).